The sequence spans 370 residues: Gibberellin 3-beta-dioxygenase 2-1 (370 aa).

The Fe2OG dioxygenase domain maps to 205–306 (MTATMHLNWY…RISLGYFLGP (102 aa)). Fe cation contacts are provided by H229, D231, and H287. R297 is an active-site residue.

The protein belongs to the iron/ascorbate-dependent oxidoreductase family. GA3OX subfamily. L-ascorbate serves as cofactor. The cofactor is Fe cation. In terms of tissue distribution, expressed in internodes, nodes and the ear of the elongating stem.

It catalyses the reaction gibberellin A20 + 2-oxoglutarate + O2 = gibberellin A1 + succinate + CO2. Functionally, converts the inactive gibberellin precursors GA9 and GA20 in the bioactives gibberellins GA4 and GA1. Also accepts GA15, GA44, the 2,3-unsaturated GA5 and 2,3-dihydroGA9 as substrate. No activity with GA12, GA53, GA24, GA19 and GA25. Also possesses 2-beta-hydroxylase, 2,3-desaturase, 2,3-epoxidase and 13-hydroxylase activities. In Triticum aestivum (Wheat), this protein is Gibberellin 3-beta-dioxygenase 2-1 (GA3ox2-1).